Here is a 337-residue protein sequence, read N- to C-terminus: Probable phospholipase A1 magnifin (337 aa).

A signal peptide spans 1-21 (MNLKYLLLFFCLVQVLHYCYS). Positions 22–33 (HGDPSLSNELDR) are excised as a propeptide. The cysteines at positions 39 and 123 are disulfide-linked. Catalysis depends on S173, which acts as the Nucleophile. The active-site Charge relay system is D201. 2 disulfides stabilise this stretch: C212/C217 and C255/C264. H266 acts as the Charge relay system in catalysis. 3 disulfides stabilise this stretch: C281/C305, C282/C330, and C298/C303.

Belongs to the AB hydrolase superfamily. Lipase family. Expressed by the venom gland.

Its subcellular location is the secreted. It carries out the reaction a 1,2-diacyl-sn-glycero-3-phosphocholine + H2O = a 2-acyl-sn-glycero-3-phosphocholine + a fatty acid + H(+). Catalyzes the hydrolysis of phosphatidylcholine with phospholipase A1 activity. May act as an allergen and induce hemolytic activity. In vivo, induces dose-dependent platelet aggregation (nanomolar concentration) and induces thrombosis. In Vespa magnifica (Hornet), this protein is Probable phospholipase A1 magnifin.